The primary structure comprises 2026 residues: E3 ubiquitin-protein ligase TRIP12 (2026 aa).

Polar residues-rich tracts occupy residues Met-1–Gly-10, Gly-32–Ser-42, and Ser-73–Pro-84. A disordered region spans residues Met-1 to Glu-437. Composition is skewed to low complexity over residues Ser-94–Pro-112, Ala-135–Ser-161, Leu-171–Gly-188, and Ala-199–Ala-241. The span at Gln-359–Arg-371 shows a compositional bias: polar residues. Residues Gly-379–Asp-391 show a composition bias toward basic and acidic residues. The segment covering Ser-392–Ala-404 has biased composition (polar residues). Residues Gly-412–Glu-430 show a composition bias toward low complexity. Positions Met-789–Lys-876 constitute a WWE domain. Disordered stretches follow at residues Ser-1008–Asn-1123 and Gly-1441–Glu-1470. Positions Lys-1040–Lys-1053 are enriched in basic residues. Over residues Pro-1056 to Asn-1065 the composition is skewed to basic and acidic residues. Low complexity predominate over residues Lys-1068–Ser-1079. Positions Thr-1094 to Ser-1104 are enriched in polar residues. Positions Glu-1530 to Pro-1604 are K-box. The 108-residue stretch at Pro-1919–Ser-2026 folds into the HECT domain. Residue Cys-1993 is the Glycyl thioester intermediate of the active site.

Belongs to the UPL family. K-HECT subfamily.

The protein localises to the nucleus. It is found in the nucleoplasm. The enzyme catalyses S-ubiquitinyl-[E2 ubiquitin-conjugating enzyme]-L-cysteine + [acceptor protein]-L-lysine = [E2 ubiquitin-conjugating enzyme]-L-cysteine + N(6)-ubiquitinyl-[acceptor protein]-L-lysine.. Its pathway is protein modification; protein ubiquitination. E3 ubiquitin-protein ligase involved in ubiquitin fusion degradation (UFD) pathway and regulation of DNA repair. Part of the ubiquitin fusion degradation (UFD) pathway, a process that mediates ubiquitination of protein at their N-terminus, regardless of the presence of lysine residues in target proteins. Acts as a key regulator of DNA damage response by acting as a suppressor of RNF168, an E3 ubiquitin-protein ligase that promotes accumulation of 'Lys-63'-linked histone H2A and H2AX at DNA damage sites, thereby acting as a guard against excessive spreading of ubiquitinated chromatin at damaged chromosomes. The chain is E3 ubiquitin-protein ligase TRIP12 (trip12) from Danio rerio (Zebrafish).